Consider the following 588-residue polypeptide: Putative calcium-binding mitochondrial carrier F55A11.4 (588 aa).

Polar residues predominate over residues 1 to 14; it reads MINKNEQTESTSGA. The interval 1–25 is disordered; that stretch reads MINKNEQTESTSGAAEQKEDDEEQY. EF-hand domains lie at 73–108, 109–139, 140–175, and 176–211; these read EKER…ETPH, IPAN…SYVL, ENEQ…IGVP, and LDDH…YPSS. Positions 86, 88, 90, 92, and 97 each coordinate Ca(2+). Ca(2+)-binding residues include aspartate 153, asparagine 155, aspartate 157, and glutamate 164. Solcar repeat units lie at residues 246 to 332, 342 to 428, and 440 to 529; these read GIWW…LKRL, ISTF…LKRT, and PGVL…VRTG. 6 consecutive transmembrane segments (helical) span residues 252-269, 307-326, 352-365, 403-422, 446-463, and 504-523; these read LVAG…TAPF, GNGI…FMCY, SAAG…IYPM, GYLP…LAIY, LACG…SYPF, and GITP…YVVY.

It belongs to the mitochondrial carrier (TC 2.A.29) family. In terms of assembly, homodimer (via N-terminus).

The protein resides in the mitochondrion inner membrane. Its function is as follows. Mitochondrial and calcium-binding carrier that catalyzes the calcium-dependent exchange of cytoplasmic glutamate with mitochondrial aspartate across the mitochondrial inner membrane. In Caenorhabditis elegans, this protein is Putative calcium-binding mitochondrial carrier F55A11.4.